We begin with the raw amino-acid sequence, 413 residues long: Putative F-box protein At3g23970 (413 aa).

The F-box domain maps to 1–42; that stretch reads MNIPPELTFEVLVRLPLKSLARFRSVRKEWKLVIDSEFFRDC.

The sequence is that of Putative F-box protein At3g23970 from Arabidopsis thaliana (Mouse-ear cress).